Here is a 224-residue protein sequence, read N- to C-terminus: uncharacterized protein (224 aa).

Positions 1-16 (MKILYSFLLLPFFSCA) are cleaved as a signal peptide.

This is an uncharacterized protein from Escherichia coli.